The primary structure comprises 276 residues: Formamidopyrimidine-DNA glycosylase (276 aa).

P2 (schiff-base intermediate with DNA) is an active-site residue. The active-site Proton donor is the E3. The active-site Proton donor; for beta-elimination activity is the K59. 3 residues coordinate DNA: H93, R112, and R155. An FPG-type zinc finger spans residues 240–274; the sequence is QVYNREGKPCPRCGDKIAKKKVGGRSSYYCPTCQK. R264 (proton donor; for delta-elimination activity) is an active-site residue.

It belongs to the FPG family. In terms of assembly, monomer. Requires Zn(2+) as cofactor.

It carries out the reaction Hydrolysis of DNA containing ring-opened 7-methylguanine residues, releasing 2,6-diamino-4-hydroxy-5-(N-methyl)formamidopyrimidine.. The catalysed reaction is 2'-deoxyribonucleotide-(2'-deoxyribose 5'-phosphate)-2'-deoxyribonucleotide-DNA = a 3'-end 2'-deoxyribonucleotide-(2,3-dehydro-2,3-deoxyribose 5'-phosphate)-DNA + a 5'-end 5'-phospho-2'-deoxyribonucleoside-DNA + H(+). Functionally, involved in base excision repair of DNA damaged by oxidation or by mutagenic agents. Acts as a DNA glycosylase that recognizes and removes damaged bases. Has a preference for oxidized purines, such as 7,8-dihydro-8-oxoguanine (8-oxoG). Has AP (apurinic/apyrimidinic) lyase activity and introduces nicks in the DNA strand. Cleaves the DNA backbone by beta-delta elimination to generate a single-strand break at the site of the removed base with both 3'- and 5'-phosphates. The polypeptide is Formamidopyrimidine-DNA glycosylase (Pelotomaculum thermopropionicum (strain DSM 13744 / JCM 10971 / SI)).